A 641-amino-acid polypeptide reads, in one-letter code: 1-deoxy-D-xylulose-5-phosphate synthase (641 aa).

Residues histidine 71 and 112 to 114 each bind thiamine diphosphate; that span reads SHA. Position 144 (aspartate 144) interacts with Mg(2+). Thiamine diphosphate contacts are provided by residues 145–146, asparagine 173, tyrosine 284, and glutamate 365; that span reads GA. Asparagine 173 contacts Mg(2+).

Belongs to the transketolase family. DXPS subfamily. As to quaternary structure, homodimer. Mg(2+) serves as cofactor. Requires thiamine diphosphate as cofactor.

It carries out the reaction D-glyceraldehyde 3-phosphate + pyruvate + H(+) = 1-deoxy-D-xylulose 5-phosphate + CO2. Its pathway is metabolic intermediate biosynthesis; 1-deoxy-D-xylulose 5-phosphate biosynthesis; 1-deoxy-D-xylulose 5-phosphate from D-glyceraldehyde 3-phosphate and pyruvate: step 1/1. Functionally, catalyzes the acyloin condensation reaction between C atoms 2 and 3 of pyruvate and glyceraldehyde 3-phosphate to yield 1-deoxy-D-xylulose-5-phosphate (DXP). The chain is 1-deoxy-D-xylulose-5-phosphate synthase from Mycolicibacterium paratuberculosis (strain ATCC BAA-968 / K-10) (Mycobacterium paratuberculosis).